The following is a 698-amino-acid chain: Glycine--tRNA ligase beta subunit (698 aa).

Belongs to the class-II aminoacyl-tRNA synthetase family. Tetramer of two alpha and two beta subunits.

The protein localises to the cytoplasm. The enzyme catalyses tRNA(Gly) + glycine + ATP = glycyl-tRNA(Gly) + AMP + diphosphate. In Xanthomonas campestris pv. campestris (strain 8004), this protein is Glycine--tRNA ligase beta subunit.